Reading from the N-terminus, the 241-residue chain is Proteasome subunit alpha (241 aa).

This sequence belongs to the peptidase T1A family. In terms of assembly, the 20S proteasome core is composed of 14 alpha and 14 beta subunits that assemble into four stacked heptameric rings, resulting in a barrel-shaped structure. The two inner rings, each composed of seven catalytic beta subunits, are sandwiched by two outer rings, each composed of seven alpha subunits. The catalytic chamber with the active sites is on the inside of the barrel. Has a gated structure, the ends of the cylinder being occluded by the N-termini of the alpha-subunits. Is capped at one or both ends by the proteasome regulatory ATPase, PAN.

The protein resides in the cytoplasm. The formation of the proteasomal ATPase PAN-20S proteasome complex, via the docking of the C-termini of PAN into the intersubunit pockets in the alpha-rings, triggers opening of the gate for substrate entry. Interconversion between the open-gate and close-gate conformations leads to a dynamic regulation of the 20S proteasome proteolysis activity. Its function is as follows. Component of the proteasome core, a large protease complex with broad specificity involved in protein degradation. In Methanosphaerula palustris (strain ATCC BAA-1556 / DSM 19958 / E1-9c), this protein is Proteasome subunit alpha.